The chain runs to 542 residues: Cytochrome P450 27C1 (542 aa).

Residues 1-80 constitute a mitochondrion transit peptide; that stretch reads MQTSAMALLA…LAAMPGPRTL (80 aa). Positions 20–75 are disordered; sequence APERGGLLGGGAPRRPQPAGARLPAGARAEDKGAGRPGSPPGGGRAEGPRSLAAMP. Over residues 32–46 the composition is skewed to low complexity; the sequence is PRRPQPAGARLPAGA. C488 provides a ligand contact to heme.

The protein belongs to the cytochrome P450 family. Heme is required as a cofactor. Widely expressed, with highest levels in the liver, kidney and pancreas. As to expression, expressed in the skin (at protein level).

The protein localises to the mitochondrion membrane. It catalyses the reaction all-trans-retinol + 2 reduced [adrenodoxin] + O2 + 2 H(+) = all-trans-3,4-didehydroretinol + 2 oxidized [adrenodoxin] + 2 H2O. The enzyme catalyses all-trans-retinol + 2 reduced [adrenodoxin] + O2 + 2 H(+) = all-trans-4-hydroxyretinol + 2 oxidized [adrenodoxin] + H2O. It carries out the reaction all-trans-retinol + 2 reduced [adrenodoxin] + O2 + 2 H(+) = all-trans-3-hydroxyretinol + 2 oxidized [adrenodoxin] + H2O. It participates in cofactor metabolism; retinol metabolism. Its function is as follows. A cytochrome P450 monooxygenase that catalyzes the 3,4 desaturation of all-trans-retinol (also called vitamin A1) to all-trans-3,4-didehydroretinol (also called vitamin A2) in the skin. Desaturates with lower efficiency all-trans retinal and all-trans retinoic acid. Forms minor amounts of 3-hydroxy and 4-hydroxy all-trans-retinol derivatives. Mechanistically, uses molecular oxygen inserting one oxygen atom into a substrate and reducing the second into a water molecule. Two electrons are provided by NADPH via a two-protein mitochondrial transfer system comprising flavoprotein FDXR (adrenodoxin/ferredoxin reductase) and nonheme iron-sulfur protein FDX1 or FDX2 (adrenodoxin/ferredoxin). The chain is Cytochrome P450 27C1 from Homo sapiens (Human).